The sequence spans 3957 residues: Ankyrin-2 (3957 aa).

Over residues 1-14 (MMNEDAAQKSDSGE) the composition is skewed to basic and acidic residues. A disordered region spans residues 1-34 (MMNEDAAQKSDSGEKFNGSSQRRKRPKKSDSNAS). ANK repeat units follow at residues 30–62 (DSNA…TCNQ), 63–92 (NGLN…SVDS), 96–125 (KGNT…NINA), 129–158 (NGFT…NQST), 162–191 (DGFT…KGKV), 193–220 (LPAL…NADV), 232–261 (SGFT…AVDF), 265–294 (NGIT…QIDA), 298–327 (DGLT…PLLA), 331–360 (NGLS…PVDD), 364–393 (DYLT…NPNA), 397–426 (NGFT…SIQA), 430–459 (SGLT…SPDV), 463–492 (RGET…LVDA), 496–525 (EEQT…HPDA), 529–558 (NGYT…AHSL), 562–591 (KGFT…AADS), 595–624 (NGLT…SPHA), 628–657 (NGYT…ETNI), 661–690 (QGVT…NIHM), 694–723 (SGLT…DQDA), 727–756 (LGYT…NVNA), 760–789 (NGYT…KPNA), and 793–822 (NGNT…EVTT). Phosphoserine occurs at positions 31 and 34. At Y378 the chain carries Phosphotyrosine. A Phosphotyrosine modification is found at Y531. S846 carries the phosphoserine modification. At T853 the chain carries Phosphothreonine. S874 carries the phosphoserine modification. The interval 966 to 1125 (SGFLVSFMVD…ELNEILNGMD (160 aa)) is interaction with SPTBN1. ZU5 domains follow at residues 968-1156 (FLVS…VVSR) and 1158-1304 (KQDS…LIDC). The interval 1289-1423 (VSFTTNVSAR…FVKVRDTTQE (135 aa)) is UPA domain. Y1382 carries the phosphotyrosine modification. One can recognise a Death 1 domain in the interval 1450-1535 (ITLPIYTKES…SDKAGSIKVK (86 aa)). Residues 1457–1486 (KESESDQEQEEEIDMTSEKNDETESTETSV) are disordered. A phosphoserine mark is found at S1459, S1461, S1473, S1500, and S1596. Residues 1461–1471 (SDQEQEEEIDM) show a composition bias toward acidic residues. Disordered stretches follow at residues 1670-2137 (AVGR…TDFS), 2197-2411 (ALDG…GLEL), 2430-2484 (AVSH…GIFP), 2507-2586 (SRLL…TPEE), 2604-2852 (EAKQ…SLPH), 2864-2904 (DISA…TDRF), and 2923-2951 (QITS…ANHT). Composition is skewed to basic and acidic residues over residues 1674–1683 (SSEKEGKDIP) and 1711–1733 (KQKQ…KGSS). Phosphoserine is present on residues S1732, S1733, and S1736. A compositionally biased stretch (basic and acidic residues) spans 1766-1783 (IKDKVKALQKRVEDEQKG). Repeat A repeat units follow at residues 1806–1817 (HPAASPSLKSER), 1818–1829 (HAPGSPSPKTER), 1830–1841 (HSTLSSSAKTER), 1842–1853 (HPPVSPSSKTEK), 1854–1865 (HSPVSPSAKTER), 1866–1877 (HSPASSSSKTEK), and 1878–1889 (HSPVSPSTKTER). The repeat-rich region stretch occupies residues 1806–1983 (HPAASPSLKS…PVSPTSKTER (178 aa)). Phosphoserine occurs at positions 1855 and 1858. Basic and acidic residues-rich tracts occupy residues 1886-1902 (KTER…ERHP) and 1921-1937 (RTEK…EKRL). The Repeat A; approximate repeat unit spans residues 1890 to 1900 (HSPVSSTKTER). 2 Repeat A repeats span residues 1901–1912 (HPPVSPSGKTDK) and 1913–1924 (RPPVSPSGRTEK). The stretch at 1925-1935 (HPPVSPGRTEK) is one Repeat A; approximate repeat. S1929 bears the Phosphoserine mark. Repeat A repeat units follow at residues 1936 to 1947 (RLPVSPSGRTDK), 1948 to 1959 (HQPVSTAGKTEK), 1960 to 1971 (HLPVSPSGKTEK), and 1972 to 1983 (QPPVSPTSKTER). Composition is skewed to basic and acidic residues over residues 1980 to 1994 (KTER…RELM), 2003 to 2034 (PSKH…KEKG), 2075 to 2093 (VKKE…HKIP), and 2102 to 2117 (EESH…KMAD). S2127 is modified (phosphoserine). Residues 2128–2137 (PDRKTSTDFS) show a composition bias toward basic and acidic residues. T2239 bears the Phosphothreonine mark. Polar residues predominate over residues 2240-2251 (PETSPESLSFSP). Residue S2243 is modified to Phosphoserine. A compositionally biased stretch (basic and acidic residues) spans 2252–2282 (KKSEEQTGETKESTKTETTTEIRSEKEHPTT). T2269 bears the Phosphothreonine mark. S2275 bears the Phosphoserine mark. Residues 2355-2376 (TFGSSAHKTQTDSEVQESTATS) are compositionally biased toward polar residues. Phosphoserine occurs at positions 2405, 2440, 2454, 2516, and 2521. Positions 2523–2545 (EQTSLMESSGKSPLSPDTPSSEE) are enriched in polar residues. 2 stretches are compositionally biased toward basic and acidic residues: residues 2576–2586 (NGEKKRFTPEE) and 2604–2619 (EAKQ…KQEE). Position 2583 is a phosphothreonine (T2583). A phosphoserine mark is found at S2679 and S2701. The span at 2696 to 2705 (PSSMDSNSSP) shows a compositional bias: low complexity. A compositionally biased stretch (basic and acidic residues) spans 2729–2776 (EPGKSEEEKDSESHLAEDRHAVSTEAEDRSYDKLNRDTDQPKICDGHG). 2 positions are modified to phosphoserine: S2781 and S2795. The segment covering 2781–2791 (SPSSSAAPVSS) has biased composition (low complexity). Polar residues predominate over residues 2892 to 2903 (SQDSSITTQTDR). S2956 carries the post-translational modification Phosphoserine. Disordered regions lie at residues 2987–3016 (NFEG…SSFE), 3069–3099 (LMVD…SEQN), and 3136–3462 (QESR…PTKE). Polar residues predominate over residues 2998–3016 (QQESTLWEMQSDSVSSSFE). Position 3075 is a phosphoserine (S3075). Residue T3078 is modified to Phosphothreonine. Over residues 3078 to 3087 (TTPDTTPART) the composition is skewed to low complexity. The span at 3090–3099 (EEGTPTSEQN) shows a compositional bias: polar residues. The segment covering 3137–3149 (ESREETLSEDVKE) has biased composition (basic and acidic residues). A compositionally biased stretch (low complexity) spans 3157 to 3169 (LPLETSAESLALS). A compositionally biased stretch (acidic residues) spans 3175–3194 (VDDEADLLPDDVSEEVEEIP). Polar residues-rich tracts occupy residues 3198–3212 (AQLN…STET) and 3256–3265 (LDFSTLTRSV). 3 positions are modified to phosphoserine: S3273, S3276, and S3277. Positions 3335–3344 (EENKADEAKP) are enriched in basic and acidic residues. Over residues 3357 to 3374 (VEQQLSDLDTSVQKTVAP) the composition is skewed to polar residues. S3390 and S3409 each carry phosphoserine. Over residues 3409 to 3423 (SYTETETESRERAEE) the composition is skewed to basic and acidic residues. A compositionally biased stretch (low complexity) spans 3446–3460 (SRSTTSSCRGGTSPT). Position 3474 is a phosphoserine (S3474). Residues 3569 to 3653 (IEERLAYIAD…DIVHLMETNT (85 aa)) form the Death 2 domain. S3735 is modified (phosphoserine). T3776, T3797, T3803, and T3814 each carry phosphothreonine. Residues 3777–3858 (PGTETSETQK…VESADNQPET (82 aa)) are disordered. S3823 bears the Phosphoserine mark. Over residues 3832–3841 (PSEHREESSP) the composition is skewed to basic and acidic residues. The residue at position 3909 (S3909) is a Phosphoserine.

As to quaternary structure, interacts with RHBG and SPTBN1. Colocalizes with Na/K ATPase, Na/Ca exchanger and SPTBN1. Directly interacts with DMD; this interaction is necessary for DMD localization at the sarcolemma. Interacts with DCTN4; this interaction is required for DCTN4 retention at costameres. Identified in complexes that contain VIM, EZR, AHNAK, BFSP1, BFSP2, ANK2, PLEC, PRX and spectrin. Interacts (via death domain) with RABGAP1L (via Rab-GAP TBC domain). In terms of processing, phosphorylated at multiple sites by different protein kinases and each phosphorylation event regulates the protein's structure and function. As to expression, present in plasma membrane of neurons as well as glial cells throughout the brain. Expressed in fetal brain and in temporal cortex of adult brain. Also expressed in the inner segments of rod photoreceptors in retina.

Its subcellular location is the cytoplasm. It localises to the cytoskeleton. It is found in the membrane. The protein localises to the myofibril. The protein resides in the sarcomere. Its subcellular location is the m line. It localises to the apical cell membrane. It is found in the cell membrane. The protein localises to the postsynaptic cell membrane. The protein resides in the early endosome. Its subcellular location is the recycling endosome. It localises to the lysosome. It is found in the mitochondrion. The protein localises to the z line. The protein resides in the sarcolemma. Its subcellular location is the T-tubule. Plays an essential role in the localization and membrane stabilization of ion transporters and ion channels in several cell types, including cardiomyocytes, as well as in striated muscle cells. In skeletal muscle, required for proper localization of DMD and DCTN4 and for the formation and/or stability of a special subset of microtubules associated with costameres and neuromuscular junctions. In cardiomyocytes, required for coordinate assembly of Na/Ca exchanger, SLC8A1/NCX1, Na/K ATPases ATP1A1 and ATP1A2 and inositol 1,4,5-trisphosphate (InsP3) receptors at sarcoplasmic reticulum/sarcolemma sites. Required for expression and targeting of SPTBN1 in neonatal cardiomyocytes and for the regulation of neonatal cardiomyocyte contraction rate. In the inner segment of rod photoreceptors, required for the coordinated expression of the Na/K ATPase, Na/Ca exchanger and beta-2-spectrin (SPTBN1). Plays a role in endocytosis and intracellular protein transport. Associates with phosphatidylinositol 3-phosphate (PI3P)-positive organelles and binds dynactin to promote long-range motility of cells. Recruits RABGAP1L to (PI3P)-positive early endosomes, where RABGAP1L inactivates RAB22A, and promotes polarized trafficking to the leading edge of the migrating cells. Part of the ANK2/RABGAP1L complex which is required for the polarized recycling of fibronectin receptor ITGA5 ITGB1 to the plasma membrane that enables continuous directional cell migration. This Homo sapiens (Human) protein is Ankyrin-2 (ANK2).